Reading from the N-terminus, the 445-residue chain is Phosphoglucosamine mutase (445 aa).

S102 serves as the catalytic Phosphoserine intermediate. 4 residues coordinate Mg(2+): S102, D241, D243, and D245. S102 bears the Phosphoserine mark.

Belongs to the phosphohexose mutase family. The cofactor is Mg(2+). Activated by phosphorylation.

The catalysed reaction is alpha-D-glucosamine 1-phosphate = D-glucosamine 6-phosphate. Its function is as follows. Catalyzes the conversion of glucosamine-6-phosphate to glucosamine-1-phosphate. The polypeptide is Phosphoglucosamine mutase (Escherichia coli O127:H6 (strain E2348/69 / EPEC)).